Consider the following 447-residue polypeptide: GA-binding protein subunit beta-2 (447 aa).

ANK repeat units follow at residues 5–34 (DLGK…PFTT), 37–66 (LGTS…SRDA), 70–99 (VDRT…DVNA), 103–132 (LKMT…DVHA), and 136–166 (FDKS…QVNA). S253 carries the phosphoserine modification. Residues 345–395 (EESKEGTERELLQQRLQEANRRAQEYRHQLLKKEQEAEQYRLRLEAMARQQ) adopt a coiled-coil conformation. Residues 418-447 (REMEERETEVTGAVGTAEPHTGVSMETVST) are disordered.

Heterotetramer of two alpha and two beta subunits. The C-terminal is necessary for the formation of a heterotetrameric GABP-alpha-2/beta-2 complex, and also facilitates homotypic dimerization. Interacts with ADGRB2.

The protein localises to the nucleus. In terms of biological role, may function as transcription factor capable of interacting with purine rich repeats (GA repeats). This Bos taurus (Bovine) protein is GA-binding protein subunit beta-2 (GABPB2).